Reading from the N-terminus, the 627-residue chain is Pro-interleukin-16 (627 aa).

Disordered stretches follow at residues 34–136 (HMPL…SIKQ), 162–267 (SSGE…LTRS), and 316–337 (GASP…ETSG). Residue Ser217 is modified to Phosphoserine. Over residues 318-337 (SPTSLSNEDSAANGCAETSG) the composition is skewed to polar residues. Positions 401–497 (KQLDSIHVTI…IVTRKLTPET (97 aa)) are interaction with PPP1R12A, PPP1R12B and PPP1R12C. PDZ domains lie at 407–492 (HVTI…VTRK) and 529–614 (TVTL…IKRK).

In terms of assembly, homotetramer. Pro-interleukin-16 interacts (via PDZ 2 domain) with PPP1R12A, PPP1R12B and PPP1R12C. Pro-interleukin-16 interacts with GRIN2A. Pro-interleukin-16 interacts with GABPB1. Pro-interleukin-16 interacts (via PDZ 3 domain) with HDAC3.

The protein localises to the secreted. It localises to the cytoplasm. Its subcellular location is the nucleus. In terms of biological role, interleukin-16 stimulates a migratory response in CD4+ lymphocytes, monocytes, and eosinophils. Primes CD4+ T-cells for IL-2 and IL-15 responsiveness. Also induces T-lymphocyte expression of interleukin 2 receptor. Ligand for CD4. Its function is as follows. Pro-interleukin-16 is involved in cell cycle progression in T-cells. Appears to be involved in transcriptional regulation of SKP2 and is probably part of a transcriptional repression complex on the core promoter of the SKP2 gene. May act as a scaffold for GABPB1 (the DNA-binding subunit the GABP transcription factor complex) and HDAC3 thus maintaining transcriptional repression and blocking cell cycle progression in resting T-cells. This is Pro-interleukin-16 (IL16) from Saimiri sciureus (Common squirrel monkey).